The primary structure comprises 686 residues: Catalase-2 (686 aa).

The span at 1–27 (MSDDQNKRVNEHSKDEQLEQYRTDNSG) shows a compositional bias: basic and acidic residues. Positions 1–43 (MSDDQNKRVNEHSKDEQLEQYRTDNSGKKMTTNQGLRVSEDEH) are disordered. Residues His78 and Asn151 contribute to the active site. Tyr365 serves as a coordination point for heme.

This sequence belongs to the catalase family. HPII subfamily. Requires heme as cofactor.

The catalysed reaction is 2 H2O2 = O2 + 2 H2O. In terms of biological role, decomposes hydrogen peroxide into water and oxygen; serves to protect cells from the toxic effects of hydrogen peroxide. Involved in sporulation. This is Catalase-2 (katE) from Bacillus subtilis (strain 168).